Consider the following 436-residue polypeptide: Trigger factor (436 aa).

The PPIase FKBP-type domain maps to 161 to 246 (GDQVNIDFVG…VNSVAAPQLP (86 aa)).

Belongs to the FKBP-type PPIase family. Tig subfamily.

The protein resides in the cytoplasm. It carries out the reaction [protein]-peptidylproline (omega=180) = [protein]-peptidylproline (omega=0). Involved in protein export. Acts as a chaperone by maintaining the newly synthesized protein in an open conformation. Functions as a peptidyl-prolyl cis-trans isomerase. This chain is Trigger factor, found in Stutzerimonas stutzeri (strain A1501) (Pseudomonas stutzeri).